A 288-amino-acid polypeptide reads, in one-letter code: 4-diphosphocytidyl-2-C-methyl-D-erythritol kinase (288 aa).

The active site involves lysine 11. ATP is bound at residue 93–103 (PFGAGLGGGSS). The active site involves aspartate 135.

The protein belongs to the GHMP kinase family. IspE subfamily.

It carries out the reaction 4-CDP-2-C-methyl-D-erythritol + ATP = 4-CDP-2-C-methyl-D-erythritol 2-phosphate + ADP + H(+). Its pathway is isoprenoid biosynthesis; isopentenyl diphosphate biosynthesis via DXP pathway; isopentenyl diphosphate from 1-deoxy-D-xylulose 5-phosphate: step 3/6. In terms of biological role, catalyzes the phosphorylation of the position 2 hydroxy group of 4-diphosphocytidyl-2C-methyl-D-erythritol. This is 4-diphosphocytidyl-2-C-methyl-D-erythritol kinase from Chlorobium limicola (strain DSM 245 / NBRC 103803 / 6330).